We begin with the raw amino-acid sequence, 314 residues long: DNA-directed RNA polymerase subunit alpha (314 aa).

Residues 1-228 (MIEFEKPNIH…DHLSIFVNLT (228 aa)) form an alpha N-terminal domain (alpha-NTD) region. Residues 245 to 314 (KEKMLEMTIE…DLGLSLRKED (70 aa)) are alpha C-terminal domain (alpha-CTD).

This sequence belongs to the RNA polymerase alpha chain family. As to quaternary structure, homodimer. The RNAP catalytic core consists of 2 alpha, 1 beta, 1 beta' and 1 omega subunit. When a sigma factor is associated with the core the holoenzyme is formed, which can initiate transcription.

It carries out the reaction RNA(n) + a ribonucleoside 5'-triphosphate = RNA(n+1) + diphosphate. Its function is as follows. DNA-dependent RNA polymerase catalyzes the transcription of DNA into RNA using the four ribonucleoside triphosphates as substrates. The polypeptide is DNA-directed RNA polymerase subunit alpha (Lactiplantibacillus plantarum (strain ATCC BAA-793 / NCIMB 8826 / WCFS1) (Lactobacillus plantarum)).